Consider the following 507-residue polypeptide: Transcription factor SOX-9 (507 aa).

Disordered stretches follow at residues 1–67 (MNLL…SEED) and 160–250 (RLRV…AGKV). Positions 30-41 (SAGSPCPSGSGS) are enriched in low complexity. Residues 42-52 (DTENTRPQENT) show a composition bias toward polar residues. Composition is skewed to basic and acidic residues over residues 56–67 (GEPDLKKESEED) and 160–174 (RLRV…DYKY). The dimerization (DIM) stretch occupies residues 63-103 (ESEEDKFPVCIREAVSQVLKGYDWTLVPMPVRVNGSSKNKP). Positions 63 to 103 (ESEEDKFPVCIREAVSQVLKGYDWTLVPMPVRVNGSSKNKP) are PQA. A Phosphoserine; by PKA modification is found at Ser64. A DNA-binding region (HMG box) is located at residues 105–173 (VKRPMNAFMV…QHKKDHPDYK (69 aa)). Position 211 is a phosphoserine; by PKA (Ser211). The tract at residues 224 to 307 (PGEHSGQSQG…LPPNGHPGVP (84 aa)) is transactivation domain (TAM). Short sequence motifs (9aaTAD) lie at residues 275 to 284 (IGELSSDVIS) and 290 to 298 (DVNEFDQYL). A disordered region spans residues 335-429 (WMSKQQAPPP…PFNLPHYSPS (95 aa)). The span at 341 to 369 (APPPPPQQPPQAPQAPQAPPQQQAPPQQP) shows a compositional bias: pro residues. Residues 378–420 (HTLTTLSSEPGQSQRTHIKTEQLSPSHYSEQQQHSPQQISYSP) show a composition bias toward polar residues. Residues 392 to 507 (RTHIKTEQLS…QPVYTQLTRP (116 aa)) form a transactivation domain (TAC) region. Residue Lys396 forms a Glycyl lysine isopeptide (Lys-Gly) (interchain with G-Cter in ubiquitin) linkage. The 9aaTAD 3 motif lies at 458–466 (SGLYSTFTY). The tract at residues 477–507 (PIADTSGVPSIPQTHSPQHWEQPVYTQLTRP) is disordered. Residues 483–507 (GVPSIPQTHSPQHWEQPVYTQLTRP) show a composition bias toward polar residues.

As to quaternary structure, homodimer; homodimerization is required for activity. Interacts (via C-terminus) with ZNF219; forming a complex that binds to the COL2A1 promoter and activates COL2A1 expression. Interacts with DDRGK1. Interacts with EP300/p300. Interacts with beta-catenin (CTNNB1); inhibiting CTNNB1 activity by competing with the binding sites of TCF/LEF within CTNNB1. Acetylated; acetylation impairs nuclear localization and ability to transactivate expression of target genes. Deacetylated by SIRT1. In terms of processing, phosphorylation at Ser-64 and Ser-211 by PKA increases transcriptional activity and may help delay chondrocyte maturation downstream of PTHLH/PTHrP signaling. Phosphorylation at either Ser-64 or Ser-211 is required for sumoylation, but phosphorylation is not dependent on sumoylation. Phosphorylated on tyrosine residues; tyrosine dephosphorylation by PTPN11/SHP2 blocks SOX9 phosphorylation by PKA and subsequent SUMOylation. Post-translationally, sumoylated; phosphorylation at either Ser-64 or Ser-211 is required for sumoylation. Sumoylation is induced by BMP signaling pathway. Ubiquitinated; ubiquitination leads to proteasomal degradation and is negatively regulated by DDRGK1. In terms of tissue distribution, expressed in the intestinal epithelium (at protein level). Expressed in progenitor cells in various organs, including chondroprogenitors, osteoprogenitors and preadipocytes, but is not expressed in most differentiated cell types such as osteoblasts and adipocytes, with the exception of chondrocytes. Highly expressed in developing chondrogenic tissues. Also expressed in some non-chondrogenic tissues such as notochord, otic vesicle and neural tube.

The protein localises to the nucleus. In terms of biological role, transcription factor that plays a key role in chondrocytes differentiation and skeletal development. Specifically binds the 5'-ACAAAG-3' DNA motif present in enhancers and super-enhancers and promotes expression of genes important for chondrogenesis, including cartilage matrix protein-coding genes COL2A1, COL4A2, COL9A1, COL11A2 and ACAN, SOX5 and SOX6. Also binds to some promoter regions. Plays a central role in successive steps of chondrocyte differentiation. Absolutely required for precartilaginous condensation, the first step in chondrogenesis during which skeletal progenitors differentiate into prechondrocytes. Together with SOX5 and SOX6, required for overt chondrogenesis when condensed prechondrocytes differentiate into early stage chondrocytes, the second step in chondrogenesis. Later, required to direct hypertrophic maturation and block osteoblast differentiation of growth plate chondrocytes: maintains chondrocyte columnar proliferation, delays prehypertrophy and then prevents osteoblastic differentiation of chondrocytes by lowering beta-catenin (CTNNB1) signaling and RUNX2 expression. Also required for chondrocyte hypertrophy, both indirectly, by keeping the lineage fate of chondrocytes, and directly, by remaining present in upper hypertrophic cells and transactivating COL10A1 along with MEF2C. Low lipid levels are the main nutritional determinant for chondrogenic commitment of skeletal progenitor cells: when lipids levels are low, FOXO (FOXO1 and FOXO3) transcription factors promote expression of SOX9, which induces chondrogenic commitment and suppresses fatty acid oxidation. Mechanistically, helps, but is not required, to remove epigenetic signatures of transcriptional repression and deposit active promoter and enhancer marks at chondrocyte-specific genes. Acts in cooperation with the Hedgehog pathway-dependent GLI (GLI1 and GLI3) transcription factors. In addition to cartilage development, also acts as a regulator of proliferation and differentiation in epithelial stem/progenitor cells: involved in the lung epithelium during branching morphogenesis, by balancing proliferation and differentiation and regulating the extracellular matrix. Controls epithelial branching during kidney development. The polypeptide is Transcription factor SOX-9 (Mus musculus (Mouse)).